The primary structure comprises 85 residues: Sec-independent protein translocase protein TatA (85 aa).

Residues Met-1–Gly-21 form a helical membrane-spanning segment. A disordered region spans residues Met-43–Ala-85. Residues Glu-46–Ala-57 show a composition bias toward basic and acidic residues. Residues Ala-58–Ala-73 are compositionally biased toward low complexity. Positions Thr-74–Ala-85 are enriched in basic and acidic residues.

It belongs to the TatA/E family. As to quaternary structure, the Tat system comprises two distinct complexes: a TatABC complex, containing multiple copies of TatA, TatB and TatC subunits, and a separate TatA complex, containing only TatA subunits. Substrates initially bind to the TatABC complex, which probably triggers association of the separate TatA complex to form the active translocon.

It localises to the cell inner membrane. Its function is as follows. Part of the twin-arginine translocation (Tat) system that transports large folded proteins containing a characteristic twin-arginine motif in their signal peptide across membranes. TatA could form the protein-conducting channel of the Tat system. The polypeptide is Sec-independent protein translocase protein TatA (Shewanella sp. (strain MR-4)).